The following is a 456-amino-acid chain: Major facilitator superfamily domain-containing protein 10 (456 aa).

11 helical membrane passes run 25–45, 87–107, 125–145, 149–169, 179–199, 204–224, 278–298, 311–328, 343–363, 365–385, and 422–442; these read VVAV…LLLP, VLFG…SAPL, LAGV…AAFL, VIGG…ADLG, AVIG…GAFL, VPWL…CFLP, LVYF…SFLV, KMFF…GAYA, AILL…LPIL, LGLL…SSVV, and LAGA…PFSI.

Belongs to the major facilitator superfamily.

It localises to the nucleus inner membrane. It is found in the cell membrane. Its function is as follows. Probable organic anion transporter which may serve as a transporter for some non-steroidal anti-inflammatory drugs (NSAIDs) as well as other organic anions across the luminal membranes of renal proximal tubules at the final excretion step into the urine. The chain is Major facilitator superfamily domain-containing protein 10 (MFSD10) from Bos taurus (Bovine).